The chain runs to 135 residues: ATP synthase epsilon chain (135 aa).

It belongs to the ATPase epsilon chain family. In terms of assembly, F-type ATPases have 2 components, CF(1) - the catalytic core - and CF(0) - the membrane proton channel. CF(1) has five subunits: alpha(3), beta(3), gamma(1), delta(1), epsilon(1). CF(0) has three main subunits: a, b and c.

The protein localises to the cell inner membrane. Its function is as follows. Produces ATP from ADP in the presence of a proton gradient across the membrane. The chain is ATP synthase epsilon chain from Rhodopseudomonas palustris (strain BisB18).